Here is a 581-residue protein sequence, read N- to C-terminus: A-type ATP synthase subunit A (581 aa).

232-239 (GPFGSGKT) is a binding site for ATP.

The protein belongs to the ATPase alpha/beta chains family. As to quaternary structure, has multiple subunits with at least A(3), B(3), C, D, E, F, H, I and proteolipid K(x).

The protein resides in the cell membrane. It catalyses the reaction ATP + H2O + 4 H(+)(in) = ADP + phosphate + 5 H(+)(out). In terms of biological role, component of the A-type ATP synthase that produces ATP from ADP in the presence of a proton gradient across the membrane. The A chain is the catalytic subunit. This Methanocorpusculum labreanum (strain ATCC 43576 / DSM 4855 / Z) protein is A-type ATP synthase subunit A.